Consider the following 335-residue polypeptide: Glucokinase (335 aa).

An ATP-binding site is contributed by 11 to 16; that stretch reads ADIGGT.

This sequence belongs to the bacterial glucokinase family.

The protein localises to the cytoplasm. It carries out the reaction D-glucose + ATP = D-glucose 6-phosphate + ADP + H(+). The chain is Glucokinase from Xanthomonas campestris pv. campestris (strain B100).